We begin with the raw amino-acid sequence, 293 residues long: Bifunctional protein FolD 1 (293 aa).

NADP(+) is bound by residues 174-176 and Thr-240; that span reads GRS.

It belongs to the tetrahydrofolate dehydrogenase/cyclohydrolase family. Homodimer.

The enzyme catalyses (6R)-5,10-methylene-5,6,7,8-tetrahydrofolate + NADP(+) = (6R)-5,10-methenyltetrahydrofolate + NADPH. It carries out the reaction (6R)-5,10-methenyltetrahydrofolate + H2O = (6R)-10-formyltetrahydrofolate + H(+). Its pathway is one-carbon metabolism; tetrahydrofolate interconversion. Catalyzes the oxidation of 5,10-methylenetetrahydrofolate to 5,10-methenyltetrahydrofolate and then the hydrolysis of 5,10-methenyltetrahydrofolate to 10-formyltetrahydrofolate. The sequence is that of Bifunctional protein FolD 1 from Saccharopolyspora erythraea (strain ATCC 11635 / DSM 40517 / JCM 4748 / NBRC 13426 / NCIMB 8594 / NRRL 2338).